A 214-amino-acid chain; its full sequence is MGVMGGTFDPIHYGHLVAASEVADLFDLDEVVFVPSGQPWQKGRQVSAAEHRYLMTVIATASNPRFSVSRVDIDRGGPTYTKDTLADLHALHPDSELYFTTGADALASIMSWQGWEELFELARFVGVSRPGYELRNEHITSLLGQLAKDALTLVEIPALAISSTDCRQRAEQSRPLWYLMPDGVVQYVSKCRLYCGACDAGARSTTSLAAGNGL.

It belongs to the NadD family.

It catalyses the reaction nicotinate beta-D-ribonucleotide + ATP + H(+) = deamido-NAD(+) + diphosphate. Its pathway is cofactor biosynthesis; NAD(+) biosynthesis; deamido-NAD(+) from nicotinate D-ribonucleotide: step 1/1. Its function is as follows. Catalyzes the reversible adenylation of nicotinate mononucleotide (NaMN) to nicotinic acid adenine dinucleotide (NaAD). This chain is Probable nicotinate-nucleotide adenylyltransferase, found in Mycobacterium tuberculosis (strain ATCC 25177 / H37Ra).